We begin with the raw amino-acid sequence, 435 residues long: Tol-Pal system protein TolB (435 aa).

The first 20 residues, Met-1–Ala-20, serve as a signal peptide directing secretion.

It belongs to the TolB family. As to quaternary structure, the Tol-Pal system is composed of five core proteins: the inner membrane proteins TolA, TolQ and TolR, the periplasmic protein TolB and the outer membrane protein Pal. They form a network linking the inner and outer membranes and the peptidoglycan layer.

The protein resides in the periplasm. Its function is as follows. Part of the Tol-Pal system, which plays a role in outer membrane invagination during cell division and is important for maintaining outer membrane integrity. In Francisella tularensis subsp. tularensis (strain WY96-3418), this protein is Tol-Pal system protein TolB.